The primary structure comprises 287 residues: MTYENNSVPRIVIKKVLAKLEKEGEGAVVRNGITKIDQKLLDPFVLLVEFSFSLSAGFPDHPHRGFESVTYMLQGGIIHKDPKGHKGTIQAGDVQWMTAGRGIIHSEFPEEEVNNGLQLWINLPSTEKMTEPKYKELSSLDIPRAEENGVEVKVIAGDSMGIKSPVYTRTPTMFLDFTLKPGSQTHQTVPESWTAFAYIIEGDEGVFGSLNSSAISAHHVVVFGPGDLVSVWNKSTSRSLRFLLIAGEPIGEPVVQCGPFVMNSQAEIDMAFDDYQNAKNGFEMAKC.

Thr-2 is modified (N-acetylthreonine).

It belongs to the pirin family. Interacts with the G protein alpha-1 subunit GPA1. Interacts with NFYB6 and NFYB9.

It is found in the nucleus. In terms of biological role, involved in abscisic acid signal transduction. Plays a role in seed germination and early seedling development. Involved in the blue light (BL) signaling. This is Pirin-1 (PRN1) from Arabidopsis thaliana (Mouse-ear cress).